A 1492-amino-acid chain; its full sequence is Condensin-2 complex subunit D3-L (1492 aa).

Residues 152 to 201 (WPRDPNASRKRKKDTLKSSQGDNRGGRKRPRPPRRDEQEMEDLSEEEQDE) are disordered. Positions 189-201 (QEMEDLSEEEQDE) are enriched in acidic residues. 3 HEAT repeats span residues 543-581 (SSDG…CHLI), 583-619 (CSSE…AQPH), and 621-659 (VLIQ…QSIT). 3 disordered regions span residues 1269-1345 (QLER…PRPR), 1359-1406 (RKAA…SLVG), and 1454-1492 (IMSP…KPSN). Positions 1277 to 1290 (NVQNPPSAESTGSP) are enriched in polar residues. The span at 1377–1388 (PSTPSPARTTSS) shows a compositional bias: low complexity.

In terms of assembly, component of the condensin-2 complex, which contains the smc2 and smc4 heterodimer, and three non SMC subunits, ncapg2, ncaph2 and ncapd3 that probably regulate the complex.

The protein localises to the nucleus. In terms of biological role, regulatory subunit of the condensin-2 complex, a complex which establishes mitotic chromosome architecture and is involved in physical rigidity of the chromatid axis. The protein is Condensin-2 complex subunit D3-L of Xenopus laevis (African clawed frog).